Reading from the N-terminus, the 50-residue chain is F420-non-reducing hydrogenase vhu subunit U (50 aa).

2 residues coordinate Ni(2+): U27 and C30. U27 is a non-standard amino acid (selenocysteine). Residues 34 to 50 (IIVKDEKGNKIIEVIKE) constitute a propeptide, removed in mature form.

It belongs to the [NiFe]/[NiFeSe] hydrogenase large subunit family. As to quaternary structure, the F420-non-reducing hydrogenase vhu is composed of four subunits; VhuA, VhuD, VhuG and VhuU. Requires Ni(2+) as cofactor.

The protein is F420-non-reducing hydrogenase vhu subunit U (vhuU) of Methanocaldococcus jannaschii (strain ATCC 43067 / DSM 2661 / JAL-1 / JCM 10045 / NBRC 100440) (Methanococcus jannaschii).